A 758-amino-acid chain; its full sequence is Translation initiation factor IF-2 (758 aa).

Residues 55–168 are disordered; that stretch reads EKNVGKQATQ…KTHQPSIPVK (114 aa). Composition is skewed to polar residues over residues 60–78 and 86–95; these read KQAT…QQNH and QRQQSATSKP. The segment covering 96–136 has biased composition (low complexity); the sequence is KVNNQQHSNSSNEKSKNTKGNQNRNMTQNNNNNNNNNNNNR. In terms of domain architecture, tr-type G spans 259–428; it reads ERPPVVTIMG…LLVAEVGELK (170 aa). The interval 268-275 is G1; sequence GHVDHGKT. 268-275 lines the GTP pocket; the sequence is GHVDHGKT. Residues 293 to 297 form a G2 region; sequence GITQH. Residues 314–317 form a G3 region; it reads DTPG. Residues 314–318 and 368–371 contribute to the GTP site; these read DTPGH and NKMD. A G4 region spans residues 368–371; that stretch reads NKMD. The segment at 404 to 406 is G5; it reads SAL.

This sequence belongs to the TRAFAC class translation factor GTPase superfamily. Classic translation factor GTPase family. IF-2 subfamily.

The protein resides in the cytoplasm. One of the essential components for the initiation of protein synthesis. Protects formylmethionyl-tRNA from spontaneous hydrolysis and promotes its binding to the 30S ribosomal subunits. Also involved in the hydrolysis of GTP during the formation of the 70S ribosomal complex. The chain is Translation initiation factor IF-2 from Lysinibacillus sphaericus (strain C3-41).